A 128-amino-acid chain; its full sequence is Fluoride-specific ion channel FluC (128 aa).

The next 4 helical transmembrane spans lie at 8–28 (IIFI…LGLL), 38–58 (LGTL…LAFF), 71–91 (FFVT…AEVI), and 103–123 (LMLA…GVFI). 2 residues coordinate Na(+): G78 and T81.

The protein belongs to the fluoride channel Fluc/FEX (TC 1.A.43) family.

It localises to the cell inner membrane. It carries out the reaction fluoride(in) = fluoride(out). With respect to regulation, na(+) is not transported, but it plays an essential structural role and its presence is essential for fluoride channel function. Fluoride-specific ion channel. Important for reducing fluoride concentration in the cell, thus reducing its toxicity. The sequence is that of Fluoride-specific ion channel FluC from Pasteurella multocida (strain Pm70).